The primary structure comprises 112 residues: Small ribosomal subunit protein bS6 (112 aa).

It belongs to the bacterial ribosomal protein bS6 family.

In terms of biological role, binds together with bS18 to 16S ribosomal RNA. This chain is Small ribosomal subunit protein bS6, found in Hyphomonas neptunium (strain ATCC 15444).